The sequence spans 283 residues: MKVISSIQELRDQLRGQNRVAFVPTMGNLHEGHLSLMRLARQHGDPVVASIFVNRLQFGPNEDFDKYPRTLQADIEKLQKEGVYVLFAPTERDMYPEPQEYRVEPPHDLGDILEGEFRPGFFKGVCTVVMKLFSCVQPRVAVFGKKDYQQLMIVRRMANQFALPVDIIPAETVRAEDGLALSSRNAYLSNEERAEAPELYRTLGQVRQTMLETVLQGQASVEEVTAKALEHLRGRGWQPDYVAVRRRSDLQPPTPENIAAGEPLVVLTAAKLGKTRLIDNLEI.

26 to 33 (MGNLHEGH) contributes to the ATP binding site. The Proton donor role is filled by His33. Gln57 contributes to the (R)-pantoate binding site. Gln57 contacts beta-alanine. 144–147 (GKKD) is a binding site for ATP. Gln150 contacts (R)-pantoate. ATP is bound by residues Val173 and 181 to 184 (LSSR).

This sequence belongs to the pantothenate synthetase family. Homodimer.

Its subcellular location is the cytoplasm. It catalyses the reaction (R)-pantoate + beta-alanine + ATP = (R)-pantothenate + AMP + diphosphate + H(+). Its pathway is cofactor biosynthesis; (R)-pantothenate biosynthesis; (R)-pantothenate from (R)-pantoate and beta-alanine: step 1/1. Functionally, catalyzes the condensation of pantoate with beta-alanine in an ATP-dependent reaction via a pantoyl-adenylate intermediate. The polypeptide is Pantothenate synthetase (Ralstonia nicotianae (strain ATCC BAA-1114 / GMI1000) (Ralstonia solanacearum)).